The chain runs to 217 residues: Growth hormone variant (217 aa).

Residues 1–26 form the signal peptide; it reads MAAGSRTSLLLAFGLLCLPWLQEGSA. 2 disulfide bridges follow: Cys-79–Cys-191 and Cys-208–Cys-215. The residue at position 132 (Ser-132) is a Phosphoserine. Asn-166 carries an N-linked (GlcNAc...) asparagine glycan. Ser-176 carries the phosphoserine modification.

The protein belongs to the somatotropin/prolactin family. In terms of tissue distribution, expressed in the placenta.

The protein localises to the secreted. Plays an important role in growth control. Its major role in stimulating body growth is to stimulate the liver and other tissues to secrete IGF1. It stimulates both the differentiation and proliferation of myoblasts. It also stimulates amino acid uptake and protein synthesis in muscle and other tissues. This Pan troglodytes (Chimpanzee) protein is Growth hormone variant (GH2).